The primary structure comprises 261 residues: MAHQAHAYHMVDPSPWPLTGAVAALLLTSGLAVWFHFKSLTLLAMGLLLMILTMIQWWRDIIREGTFQGHHTPPVQKGLRYGMILFITSEVFFFLGFFWAFYHSSLAPTPELGGIWPPTGITPLDPFEVPLLNTAVLLASGVTVTWTHHSLMEGKRTEATQALTLTILLGLYFTALQAMEYYEAPFTIADGVYGTTFFVATGFHGLHVIIGSTFLAGCLLRQILYHFTSSHHFGFEAAAWYWHFVDVVWLFLYVSIYWWGS.

Topologically, residues 1–15 (MAHQAHAYHMVDPSP) are mitochondrial matrix. A helical transmembrane segment spans residues 16-34 (WPLTGAVAALLLTSGLAVW). Over 35 to 40 (FHFKSL) the chain is Mitochondrial intermembrane. The chain crosses the membrane as a helical span at residues 41–66 (TLLAMGLLLMILTMIQWWRDIIREGT). Topologically, residues 67–72 (FQGHHT) are mitochondrial matrix. A helical transmembrane segment spans residues 73-105 (PPVQKGLRYGMILFITSEVFFFLGFFWAFYHSS). Topologically, residues 106–128 (LAPTPELGGIWPPTGITPLDPFE) are mitochondrial intermembrane. A helical membrane pass occupies residues 129 to 152 (VPLLNTAVLLASGVTVTWTHHSLM). The Mitochondrial matrix portion of the chain corresponds to 153 to 155 (EGK). The chain crosses the membrane as a helical span at residues 156–183 (RTEATQALTLTILLGLYFTALQAMEYYE). Topologically, residues 184–190 (APFTIAD) are mitochondrial intermembrane. The chain crosses the membrane as a helical span at residues 191–223 (GVYGTTFFVATGFHGLHVIIGSTFLAGCLLRQI). Residues 224 to 232 (LYHFTSSHH) are Mitochondrial matrix-facing. Residues 233 to 256 (FGFEAAAWYWHFVDVVWLFLYVSI) form a helical membrane-spanning segment. The Mitochondrial intermembrane segment spans residues 257 to 261 (YWWGS).

The protein belongs to the cytochrome c oxidase subunit 3 family. Component of the cytochrome c oxidase (complex IV, CIV), a multisubunit enzyme composed of 14 subunits. The complex is composed of a catalytic core of 3 subunits MT-CO1, MT-CO2 and MT-CO3, encoded in the mitochondrial DNA, and 11 supernumerary subunits COX4I, COX5A, COX5B, COX6A, COX6B, COX6C, COX7A, COX7B, COX7C, COX8 and NDUFA4, which are encoded in the nuclear genome. The complex exists as a monomer or a dimer and forms supercomplexes (SCs) in the inner mitochondrial membrane with NADH-ubiquinone oxidoreductase (complex I, CI) and ubiquinol-cytochrome c oxidoreductase (cytochrome b-c1 complex, complex III, CIII), resulting in different assemblies (supercomplex SCI(1)III(2)IV(1) and megacomplex MCI(2)III(2)IV(2)).

The protein localises to the mitochondrion inner membrane. It carries out the reaction 4 Fe(II)-[cytochrome c] + O2 + 8 H(+)(in) = 4 Fe(III)-[cytochrome c] + 2 H2O + 4 H(+)(out). Functionally, component of the cytochrome c oxidase, the last enzyme in the mitochondrial electron transport chain which drives oxidative phosphorylation. The respiratory chain contains 3 multisubunit complexes succinate dehydrogenase (complex II, CII), ubiquinol-cytochrome c oxidoreductase (cytochrome b-c1 complex, complex III, CIII) and cytochrome c oxidase (complex IV, CIV), that cooperate to transfer electrons derived from NADH and succinate to molecular oxygen, creating an electrochemical gradient over the inner membrane that drives transmembrane transport and the ATP synthase. Cytochrome c oxidase is the component of the respiratory chain that catalyzes the reduction of oxygen to water. Electrons originating from reduced cytochrome c in the intermembrane space (IMS) are transferred via the dinuclear copper A center (CU(A)) of subunit 2 and heme A of subunit 1 to the active site in subunit 1, a binuclear center (BNC) formed by heme A3 and copper B (CU(B)). The BNC reduces molecular oxygen to 2 water molecules using 4 electrons from cytochrome c in the IMS and 4 protons from the mitochondrial matrix. The chain is Cytochrome c oxidase subunit 3 (mt-co3) from Polypterus ornatipinnis (Ornate bichir).